A 180-amino-acid polypeptide reads, in one-letter code: Large ribosomal subunit protein uL6 (180 aa).

The protein belongs to the universal ribosomal protein uL6 family. In terms of assembly, part of the 50S ribosomal subunit.

Its function is as follows. This protein binds to the 23S rRNA, and is important in its secondary structure. It is located near the subunit interface in the base of the L7/L12 stalk, and near the tRNA binding site of the peptidyltransferase center. The protein is Large ribosomal subunit protein uL6 of Picrophilus torridus (strain ATCC 700027 / DSM 9790 / JCM 10055 / NBRC 100828 / KAW 2/3).